Here is a 315-residue protein sequence, read N- to C-terminus: MYFIFSTASLSSVTLIVMTNTDHPNQPNPPHLHTPVLCQEVIDGLAIEPNGHYLDATLGRGGHSRLILEAFPDVRVTGIDLDEEAIAITQENFSLMGDKRLQVWQGNFADYPGEIGEFNGIIADLGVSSPQFDVPERGFSFRHQAPLDMRMNREQSLTAGEIINHWDQTSLADLFYQYGEERRSRAIARRLVQQRPFETTTELAEAIAKCFPPKQRYGRIHPATRVFQALRIAVNDELGSLERFLEKAPHWLKPGGRIGIISFHSLEDRRVKYSFRDSLLLDVITKKPIIPQPEEEEKNPRSRSAKLRFAQRKPL.

S-adenosyl-L-methionine is bound by residues 61 to 63 (GGH), aspartate 80, phenylalanine 108, aspartate 124, and glutamine 131. The segment at 291–315 (PQPEEEEKNPRSRSAKLRFAQRKPL) is disordered. Positions 301 to 315 (RSRSAKLRFAQRKPL) are enriched in basic residues.

It belongs to the methyltransferase superfamily. RsmH family.

The protein localises to the cytoplasm. It catalyses the reaction cytidine(1402) in 16S rRNA + S-adenosyl-L-methionine = N(4)-methylcytidine(1402) in 16S rRNA + S-adenosyl-L-homocysteine + H(+). Functionally, specifically methylates the N4 position of cytidine in position 1402 (C1402) of 16S rRNA. The polypeptide is Ribosomal RNA small subunit methyltransferase H (Crocosphaera subtropica (strain ATCC 51142 / BH68) (Cyanothece sp. (strain ATCC 51142))).